The following is a 173-amino-acid chain: Flagellar assembly factor FliW (173 aa).

The tract at residues 152–173 is disordered; it reads STTVRRKASPPAAGEDKGDVQE.

The protein belongs to the FliW family. Interacts with translational regulator CsrA and flagellin(s).

It is found in the cytoplasm. In terms of biological role, acts as an anti-CsrA protein, binds CsrA and prevents it from repressing translation of its target genes, one of which is flagellin. Binds to flagellin and participates in the assembly of the flagellum. The polypeptide is Flagellar assembly factor FliW (Nitratidesulfovibrio vulgaris (strain ATCC 29579 / DSM 644 / CCUG 34227 / NCIMB 8303 / VKM B-1760 / Hildenborough) (Desulfovibrio vulgaris)).